The primary structure comprises 81 residues: Conotoxin Im6.1 (81 aa).

Positions 1-20 (MSKLGVVLFTLLLLVPLVTP) are cleaved as a signal peptide. Positions 21–47 (ERDGGKWTMLAKNKKAMKRNLMDFITR) are excised as a propeptide. 3 cysteine pairs are disulfide-bonded: C49–C61, C54–C67, and C60–C76.

The protein belongs to the conotoxin M superfamily. As to expression, expressed by the venom duct.

The protein localises to the secreted. The polypeptide is Conotoxin Im6.1 (Conus imperialis (Imperial cone)).